The following is a 310-amino-acid chain: 4-hydroxyproline 2-epimerase (310 aa).

The Proton acceptor role is filled by C88. Substrate is bound by residues 89–90, H208, and D232; that span reads GH. The active-site Proton donor is the C236. 237–238 lines the substrate pocket; the sequence is GT.

Belongs to the proline racemase family.

The catalysed reaction is trans-4-hydroxy-L-proline = cis-4-hydroxy-D-proline. In terms of biological role, catalyzes the epimerization of trans-4-hydroxy-L-proline (t4LHyp) to cis-4-hydroxy-D-proline (c4DHyp). Is likely involved in a degradation pathway that converts t4LHyp to alpha-ketoglutarate. Displays no proline racemase activity. This Burkholderia cenocepacia (strain ATCC BAA-245 / DSM 16553 / LMG 16656 / NCTC 13227 / J2315 / CF5610) (Burkholderia cepacia (strain J2315)) protein is 4-hydroxyproline 2-epimerase.